A 501-amino-acid polypeptide reads, in one-letter code: Glutamyl-tRNA(Gln) amidotransferase subunit A (501 aa).

Active-site charge relay system residues include K80 and S155. S179 serves as the catalytic Acyl-ester intermediate.

It belongs to the amidase family. GatA subfamily. In terms of assembly, heterotrimer of A, B and C subunits.

The catalysed reaction is L-glutamyl-tRNA(Gln) + L-glutamine + ATP + H2O = L-glutaminyl-tRNA(Gln) + L-glutamate + ADP + phosphate + H(+). In terms of biological role, allows the formation of correctly charged Gln-tRNA(Gln) through the transamidation of misacylated Glu-tRNA(Gln) in organisms which lack glutaminyl-tRNA synthetase. The reaction takes place in the presence of glutamine and ATP through an activated gamma-phospho-Glu-tRNA(Gln). This chain is Glutamyl-tRNA(Gln) amidotransferase subunit A, found in Cupriavidus taiwanensis (strain DSM 17343 / BCRC 17206 / CCUG 44338 / CIP 107171 / LMG 19424 / R1) (Ralstonia taiwanensis (strain LMG 19424)).